Here is a 211-residue protein sequence, read N- to C-terminus: Uracil phosphoribosyltransferase (211 aa).

5-phospho-alpha-D-ribose 1-diphosphate-binding positions include Arg-79, Arg-104, and 131 to 139 (DPMLATGGS). Uracil contacts are provided by residues Ile-196 and 201–203 (GDA). A 5-phospho-alpha-D-ribose 1-diphosphate-binding site is contributed by Asp-202.

Belongs to the UPRTase family. Mg(2+) serves as cofactor.

The catalysed reaction is UMP + diphosphate = 5-phospho-alpha-D-ribose 1-diphosphate + uracil. It participates in pyrimidine metabolism; UMP biosynthesis via salvage pathway; UMP from uracil: step 1/1. With respect to regulation, allosterically activated by GTP. Functionally, catalyzes the conversion of uracil and 5-phospho-alpha-D-ribose 1-diphosphate (PRPP) to UMP and diphosphate. This chain is Uracil phosphoribosyltransferase, found in Limosilactobacillus fermentum (strain NBRC 3956 / LMG 18251) (Lactobacillus fermentum).